Consider the following 211-residue polypeptide: Small ribosomal subunit protein uS3 (211 aa).

Residues 38 to 106 (LRKFIKKAFY…NIELNIIEVK (69 aa)) form the KH type-2 domain.

Belongs to the universal ribosomal protein uS3 family. In terms of assembly, part of the 30S ribosomal subunit. Forms a tight complex with proteins S10 and S14.

Its function is as follows. Binds the lower part of the 30S subunit head. Binds mRNA in the 70S ribosome, positioning it for translation. The polypeptide is Small ribosomal subunit protein uS3 (Ehrlichia chaffeensis (strain ATCC CRL-10679 / Arkansas)).